The chain runs to 78 residues: Structural DNA-binding protein p10 (78 aa).

The span at 1–25 shows a compositional bias: low complexity; sequence MPTKAGTKSTANKKTTKGSSKSGSA. The interval 1–41 is disordered; sequence MPTKAGTKSTANKKTTKGSSKSGSARGHTGKTHAPPSMHSG.

This sequence belongs to the asfivirus P10 family.

The protein localises to the virion. In terms of biological role, may play a role in genome packaging through direct interaction with viral DNA. Binds to ssDNA and dsDNA with the same apparent affinity in vitro. The sequence is that of Structural DNA-binding protein p10 from African swine fever virus (isolate Warthog/Namibia/Wart80/1980) (ASFV).